The following is a 389-amino-acid chain: Large ribosomal subunit protein uL3 (389 aa).

Residues 1–36 (MSHRKFEHPRHGSLGFLPRKRSSRHRGKVKSFPKDD) are disordered. A compositionally biased stretch (basic residues) spans 18–31 (PRKRSSRHRGKVKS).

It belongs to the universal ribosomal protein uL3 family.

It is found in the cytoplasm. The L3 protein is a component of the large subunit of cytoplasmic ribosomes. The protein is Large ribosomal subunit protein uL3 (RPL3) of Oryza sativa subsp. japonica (Rice).